We begin with the raw amino-acid sequence, 379 residues long: tRNA 2-selenouridine synthase (379 aa).

Residues 17–140 enclose the Rhodanese domain; sequence FLSGAPLLDT…MRRFLIESLE (124 aa). Residue Cys100 is the S-selanylcysteine intermediate of the active site.

It belongs to the SelU family. As to quaternary structure, monomer.

It catalyses the reaction 5-methylaminomethyl-2-thiouridine(34) in tRNA + selenophosphate + (2E)-geranyl diphosphate + H2O + H(+) = 5-methylaminomethyl-2-selenouridine(34) in tRNA + (2E)-thiogeraniol + phosphate + diphosphate. The catalysed reaction is 5-methylaminomethyl-2-thiouridine(34) in tRNA + (2E)-geranyl diphosphate = 5-methylaminomethyl-S-(2E)-geranyl-thiouridine(34) in tRNA + diphosphate. The enzyme catalyses 5-methylaminomethyl-S-(2E)-geranyl-thiouridine(34) in tRNA + selenophosphate + H(+) = 5-methylaminomethyl-2-(Se-phospho)selenouridine(34) in tRNA + (2E)-thiogeraniol. It carries out the reaction 5-methylaminomethyl-2-(Se-phospho)selenouridine(34) in tRNA + H2O = 5-methylaminomethyl-2-selenouridine(34) in tRNA + phosphate. Functionally, involved in the post-transcriptional modification of the uridine at the wobble position (U34) of tRNA(Lys), tRNA(Glu) and tRNA(Gln). Catalyzes the conversion of 2-thiouridine (S2U-RNA) to 2-selenouridine (Se2U-RNA). Acts in a two-step process involving geranylation of 2-thiouridine (S2U) to S-geranyl-2-thiouridine (geS2U) and subsequent selenation of the latter derivative to 2-selenouridine (Se2U) in the tRNA chain. The chain is tRNA 2-selenouridine synthase from Hahella chejuensis (strain KCTC 2396).